A 60-amino-acid chain; its full sequence is UPF0434 protein Ent638_1436 (60 aa).

This sequence belongs to the UPF0434 family.

The chain is UPF0434 protein Ent638_1436 from Enterobacter sp. (strain 638).